Reading from the N-terminus, the 823-residue chain is Leucine--tRNA ligase (823 aa).

The 'HIGH' region motif lies at 55-65; the sequence is PYPSGNLHIGH. Residues 590-594 carry the 'KMSKS' region motif; that stretch reads KMSKS. Lys-593 provides a ligand contact to ATP.

The protein belongs to the class-I aminoacyl-tRNA synthetase family.

The protein localises to the cytoplasm. The enzyme catalyses tRNA(Leu) + L-leucine + ATP = L-leucyl-tRNA(Leu) + AMP + diphosphate. This Deinococcus radiodurans (strain ATCC 13939 / DSM 20539 / JCM 16871 / CCUG 27074 / LMG 4051 / NBRC 15346 / NCIMB 9279 / VKM B-1422 / R1) protein is Leucine--tRNA ligase.